Consider the following 66-residue polypeptide: Protein dhr (66 aa).

Involved in the depression of host DNA replication. The chain is Protein dhr (dhr) from Escherichia phage 186 (Bacteriophage 186).